The primary structure comprises 103 residues: N(4)-acetylcytidine amidohydrolase (103 aa).

Residues 6–101 (ITFSQRFQDD…QTQFYVIEFK (96 aa)) enclose the ASCH domain. The active-site Proton acceptor is the Lys21. Thr24 functions as the Nucleophile in the catalytic mechanism. Glu74 (proton donor) is an active-site residue.

This sequence belongs to the N(4)-acetylcytidine amidohydrolase family.

The catalysed reaction is N(4)-acetylcytidine + H2O = cytidine + acetate + H(+). It carries out the reaction N(4)-acetyl-2'-deoxycytidine + H2O = 2'-deoxycytidine + acetate + H(+). The enzyme catalyses N(4)-acetylcytosine + H2O = cytosine + acetate + H(+). Functionally, catalyzes the hydrolysis of N(4)-acetylcytidine (ac4C). The protein is N(4)-acetylcytidine amidohydrolase (yqfB) of Shigella boydii serotype 4 (strain Sb227).